Consider the following 224-residue polypeptide: Cytosolic-abundant heat soluble protein 77580 (224 aa).

Residues 1-13 show a composition bias toward low complexity; the sequence is MSNYQQESSYQYS. Residues 1–38 form a disordered region; the sequence is MSNYQQESSYQYSDRSNNGQQQEQQEKKEVEHSSYTHT. The segment covering 24–38 has biased composition (basic and acidic residues); that stretch reads QQEKKEVEHSSYTHT. Residues 83–191 are a coiled coil; that stretch reads VIDTEAETEE…KRVLERSKFH (109 aa). CAHS motif regions lie at residues 122–140 and 159–177; these read YRKQ…LEKQ and QKRQ…LERE. The span at 200–215 shows a compositional bias: low complexity; it reads AAAGSTHSGSSSVAVS. The tract at residues 200 to 224 is disordered; the sequence is AAAGSTHSGSSSVAVSESEKFQTNN.

The protein belongs to the Cytosolic-abundant heat soluble protein (CAHS) family.

Its subcellular location is the cytoplasm. CAHS proteins are cytosolic heat soluble proteins that seem to contribute to the anhydrobiosis in tardigrades, but their specific mechanisms are yet to be identified. It is possible that protection during anhydrobiosis might occur via the stabilization of vitrifying small molecules such as sugars, but not via the direct glass transition of CAHS proteins themselves. This is Cytosolic-abundant heat soluble protein 77580 from Hypsibius exemplaris (Freshwater tardigrade).